Consider the following 95-residue polypeptide: MEQAPEDQGPQREPYNEWALELLEDLKNEALRHFPRPWLHGLGQYFYNTYGDTWEGVEAIIRTLQQLLFIHYRIGCQHSRIGITPQRRRNGASRS.

Residues 1–42 (MEQAPEDQGPQREPYNEWALELLEDLKNEALRHFPRPWLHGL) are homooligomerization. Ser79, Ser93, and Ser95 each carry phosphoserine; by host.

It belongs to the HIV-1 VPR protein family. Homooligomer, may form homodimer. Interacts with p6-gag region of the Pr55 Gag precursor protein through a (Leu-X-X)4 motif near the C-terminus of the P6gag protein. Interacts with host UNG. May interact with host RAD23A/HHR23A. Interacts with host VPRBP/DCAF1, leading to hijack the CUL4A-RBX1-DDB1-DCAF1/VPRBP complex, mediating ubiquitination of host proteins such as TERT and ZGPAT and arrest of the cell cycle in G2 phase. Phosphorylated on several residues by host. These phosphorylations regulate VPR activity for the nuclear import of the HIV-1 pre-integration complex.

Its subcellular location is the virion. It localises to the host nucleus. It is found in the host extracellular space. Functionally, during virus replication, may deplete host UNG protein, and incude G2-M cell cycle arrest. Acts by targeting specific host proteins for degradation by the 26S proteasome, through association with the cellular CUL4A-DDB1 E3 ligase complex by direct interaction with host VPRPB/DCAF-1. Cell cycle arrest reportedly occurs within hours of infection and is not blocked by antiviral agents, suggesting that it is initiated by the VPR carried into the virion. Additionally, VPR induces apoptosis in a cell cycle dependent manner suggesting that these two effects are mechanistically linked. Detected in the serum and cerebrospinal fluid of AIDS patient, VPR may also induce cell death to bystander cells. During virus entry, plays a role in the transport of the viral pre-integration (PIC) complex to the host nucleus. This function is crucial for viral infection of non-dividing macrophages. May act directly at the nuclear pore complex, by binding nucleoporins phenylalanine-glycine (FG)-repeat regions. The polypeptide is Protein Vpr (Pan troglodytes (Chimpanzee)).